The following is a 148-amino-acid chain: Ribonuclease 4 (148 aa).

The signal sequence occupies residues Met1 to Gly29. The residue at position 30 (Gln30) is a Pyrrolidone carboxylic acid. 5 residues coordinate dUMP: Arg36, His41, Lys69, Asn72, and Thr73. His41 (proton acceptor) is an active-site residue. 4 disulfide bridges follow: Cys54–Cys110, Cys68–Cys121, Cys86–Cys136, and Cys93–Cys100. His145 acts as the Proton donor in catalysis. Position 146 (Phe146) interacts with dUMP.

This sequence belongs to the pancreatic ribonuclease family. In terms of tissue distribution, expressed in the cortical tubules of the kidney (at protein level). Also expressed in the medullary tubules of the kidney.

It localises to the secreted. Functionally, cleaves preferentially after uridine bases. Has antimicrobial activity against uropathogenic E.coli (UPEC). Probably contributes to urinary tract sterility. This is Ribonuclease 4 (Rnase4) from Mus musculus (Mouse).